Here is a 372-residue protein sequence, read N- to C-terminus: Putative 8-amino-7-oxononanoate synthase (372 aa).

Arg-20 provides a ligand contact to substrate. 94–95 (GY) contacts pyridoxal 5'-phosphate. His-119 contributes to the substrate binding site. Pyridoxal 5'-phosphate-binding positions include Ser-167, 192–195 (DDAH), and 223–226 (TLSK). Lys-226 is modified (N6-(pyridoxal phosphate)lysine). Thr-337 is a binding site for substrate.

This sequence belongs to the class-II pyridoxal-phosphate-dependent aminotransferase family. BioF subfamily. In terms of assembly, homodimer. Pyridoxal 5'-phosphate is required as a cofactor.

It carries out the reaction 6-carboxyhexanoyl-[ACP] + L-alanine + H(+) = (8S)-8-amino-7-oxononanoate + holo-[ACP] + CO2. Its pathway is cofactor biosynthesis; biotin biosynthesis. In terms of biological role, catalyzes the decarboxylative condensation of pimeloyl-[acyl-carrier protein] and L-alanine to produce 8-amino-7-oxononanoate (AON), [acyl-carrier protein], and carbon dioxide. This chain is Putative 8-amino-7-oxononanoate synthase (bioF), found in Methanocaldococcus jannaschii (strain ATCC 43067 / DSM 2661 / JAL-1 / JCM 10045 / NBRC 100440) (Methanococcus jannaschii).